We begin with the raw amino-acid sequence, 343 residues long: Ribosomal RNA small subunit methyltransferase C (343 aa).

It belongs to the methyltransferase superfamily. RsmC family. In terms of assembly, monomer.

The protein localises to the cytoplasm. The enzyme catalyses guanosine(1207) in 16S rRNA + S-adenosyl-L-methionine = N(2)-methylguanosine(1207) in 16S rRNA + S-adenosyl-L-homocysteine + H(+). In terms of biological role, specifically methylates the guanine in position 1207 of 16S rRNA in the 30S particle. In Escherichia coli (strain SMS-3-5 / SECEC), this protein is Ribosomal RNA small subunit methyltransferase C.